Reading from the N-terminus, the 244-residue chain is tRNA1(Val) (adenine(37)-N6)-methyltransferase (244 aa).

The protein belongs to the methyltransferase superfamily. tRNA (adenine-N(6)-)-methyltransferase family.

The protein resides in the cytoplasm. The enzyme catalyses adenosine(37) in tRNA1(Val) + S-adenosyl-L-methionine = N(6)-methyladenosine(37) in tRNA1(Val) + S-adenosyl-L-homocysteine + H(+). Its function is as follows. Specifically methylates the adenine in position 37 of tRNA(1)(Val) (anticodon cmo5UAC). The protein is tRNA1(Val) (adenine(37)-N6)-methyltransferase of Photorhabdus laumondii subsp. laumondii (strain DSM 15139 / CIP 105565 / TT01) (Photorhabdus luminescens subsp. laumondii).